Reading from the N-terminus, the 210-residue chain is Aminoglycoside 2'-N-acetyltransferase (210 aa).

One can recognise an N-acetyltransferase domain in the interval isoleucine 21–proline 189. Residues aspartate 54 and glutamate 106 to alanine 107 contribute to the substrate site. CoA is bound by residues valine 108 to valine 110 and arginine 115 to glycine 120. Substrate-binding positions include serine 141 and glutamate 176–aspartate 177.

This sequence belongs to the AAC(2')-I acetyltransferase family. In terms of assembly, homodimer.

Catalyzes the coenzyme A-dependent acetylation of the 2' hydroxyl or amino group of a broad spectrum of aminoglycosides. It confers resistance to aminoglycosides. This chain is Aminoglycoside 2'-N-acetyltransferase (aac), found in Mycolicibacterium smegmatis (strain ATCC 700084 / mc(2)155) (Mycobacterium smegmatis).